We begin with the raw amino-acid sequence, 466 residues long: Cell division protein FtsP (466 aa).

The segment at residues 1–28 (MNYSRRSLFKKTLIATALSALPATLLAA) is a signal peptide (tat-type signal).

The protein belongs to the FtsP family. In terms of processing, predicted to be exported by the Tat system. The position of the signal peptide cleavage has not been experimentally proven.

It localises to the periplasm. In terms of biological role, cell division protein that is required for growth during stress conditions. May be involved in protecting or stabilizing the divisomal assembly under conditions of stress. The sequence is that of Cell division protein FtsP from Actinobacillus succinogenes (strain ATCC 55618 / DSM 22257 / CCUG 43843 / 130Z).